The chain runs to 1848 residues: Cellulose-binding protein A (1848 aa).

The signal sequence occupies residues 1–28; the sequence is MQKKKSLNLLLALMMVFALVLPSIPALA. The CBM3 domain maps to 29–190; that stretch reads ATSSMSVEFY…GAKVLGTAPG (162 aa). 9 Cohesin domains span residues 291-428, 435-570, 668-801, 810-943, 952-1085, 1094-1227, 1236-1369, 1377-1511, and 1709-1847; these read VTAT…TVTI, MQIS…SVTI, VTAT…SVTI, VKAT…RLTI, and FAVK…SVKV.

Post-translationally, the N-terminus is blocked. In terms of processing, glycosylated.

It localises to the secreted. In terms of biological role, binds to cellulose fibers and coordinates cellulase enzymes. The polypeptide is Cellulose-binding protein A (cbpA) (Clostridium cellulovorans).